We begin with the raw amino-acid sequence, 298 residues long: UDP-N-acetylenolpyruvoylglucosamine reductase (298 aa).

Residues 26–191 enclose the FAD-binding PCMH-type domain; the sequence is KTGGAADVFV…LDATFSLALE (166 aa). Residue R170 is part of the active site. The active-site Proton donor is S220. E290 is a catalytic residue.

The protein belongs to the MurB family. FAD serves as cofactor.

Its subcellular location is the cytoplasm. It carries out the reaction UDP-N-acetyl-alpha-D-muramate + NADP(+) = UDP-N-acetyl-3-O-(1-carboxyvinyl)-alpha-D-glucosamine + NADPH + H(+). Its pathway is cell wall biogenesis; peptidoglycan biosynthesis. In terms of biological role, cell wall formation. This is UDP-N-acetylenolpyruvoylglucosamine reductase from Listeria monocytogenes serovar 1/2a (strain ATCC BAA-679 / EGD-e).